Reading from the N-terminus, the 405-residue chain is MKNEVVYKQLTEKILPFWNAMRDDENGGFYGYMSEDLHIDDHADKGCILNSRILWFYSTAYMYLQDEKLLDNAKHAFEFLKTYCFDPMCGGIFWSVRYNGKPADTTKHTYNQAFAIYALSAYYEATGSIEAIAIAEIIYEKIEDTMRDTKGYLEAFTRDFRPADNDKLSENGVMAERTMNTLLHIIEAYSALVHALRKKVADPAKGDVRDELFMNVVENKLAAALELMRDKFYNSDRHRLDVFFDKEYESLIDLTSYGHDIEASWLLEWAAGILDDEEITESLHPISSDLVEKVYKEAFDGHSIVNECEDGDVNTDRIWWVEAESVLGFLKAFEREGKEEYRKAAHEILAFILDKQVDKREGSEWFEMLKEDGTPCHKPMVREWKCPYHNGRMCLEILKSGIEIG.

Belongs to the cellobiose 2-epimerase family.

The enzyme catalyses D-cellobiose = beta-D-glucosyl-(1-&gt;4)-D-mannopyranose. Functionally, catalyzes the reversible epimerization of cellobiose to 4-O-beta-D-glucopyranosyl-D-mannose (Glc-Man). Can also epimerize lactose to epilactose. The chain is Cellobiose 2-epimerase (ce13) from Eubacterium cellulosolvens.